Reading from the N-terminus, the 444-residue chain is Xylose isomerase (444 aa).

Residues His-101 and Asp-104 contribute to the active site. The Mg(2+) site is built by Glu-232, Glu-268, His-271, Asp-296, Asp-307, Asp-309, and Asp-339.

Belongs to the xylose isomerase family. Homotetramer. It depends on Mg(2+) as a cofactor.

The protein localises to the cytoplasm. The enzyme catalyses alpha-D-xylose = alpha-D-xylulofuranose. In Thermotoga sp. (strain RQ2), this protein is Xylose isomerase.